The primary structure comprises 115 residues: Hydrogenase maturation factor HypA (115 aa).

Position 2 (H2) interacts with Ni(2+). The Zn(2+) site is built by C73, C76, C89, and C92.

It belongs to the HypA/HybF family.

Its function is as follows. Involved in the maturation of [NiFe] hydrogenases. Required for nickel insertion into the metal center of the hydrogenase. This is Hydrogenase maturation factor HypA from Aquifex aeolicus (strain VF5).